The chain runs to 1114 residues: Putative surface protein SAV2496/SAV2497 (1114 aa).

The first 50 residues, 1–50, serve as a signal peptide directing secretion; sequence MRDKKGPVNKRVDFLSNKLNKYSIRKFTVGTASILIGSLMYLGTQQEAEA. Disordered stretches follow at residues 76–116, 440–473, and 496–1088; these read TNKD…EDTP, KFNPDLAPGTEKVTREGQKGEKTITTPTLKNPLT, and EYGP…TGLE. Composition is skewed to basic and acidic residues over residues 96–116, 451–461, 505–523, 554–570, and 579–589; these read DTIEHEASVKAEDISKKEDTP, KVTREGQKGEK, GHRDEFDPKLPTGEKEEVP, and SIVEKEEIPFEKERKFN. One can recognise a G5 1 domain in the interval 419 to 501; sequence SAKNNNRIRK…NELTEYGPET (83 aa). The G5 2 domain occupies 547–628; that stretch reads YGPVKGDSIV…NELTEYGPET (82 aa). Low complexity predominate over residues 590-604; the sequence is TTTPTLKNPLTGEII. 11 stretches are compositionally biased toward basic and acidic residues: residues 605–618, 632–650, 681–697, 706–716, 733–746, 760–778, 809–825, 834–844, 861–874, 918–929, and 946–965; these read SKGESKEEITKDPI, GHRDEFDPKLPTGEKEEVP, SIVEKEEIPFKKERKFN, KVTREGQKGEK, SIVEKEEIPFEKERKFN, SKGESKEEITKDPV, KVIEEPVDDVIK, and FETKREFNPKLQPGEERVKQ. In terms of domain architecture, G5 3 spans 674–756; the sequence is YGPVKGDSIV…NELTEYGPET (83 aa). A G5 4 domain is found at 802 to 884; the sequence is YGPVKGDSIV…NELTEFGGEK (83 aa). The G5 5 domain occupies 930 to 1012; the sequence is HGPKTGTPET…DKIVEFGGEK (83 aa). Polar residues predominate over residues 968-982; it reads QPGSKTITTPITVNP. The segment covering 996-1026 has biased composition (basic and acidic residues); sequence EITKQPVDKIVEFGGEKPKDPKGPENPEKPS. Residues 1082 to 1086 carry the LPXTG sorting signal motif; it reads LPKTG. Residue Thr1085 is modified to Pentaglycyl murein peptidoglycan amidated threonine. The propeptide at 1086-1114 is removed by sortase; the sequence is GLESTQKGLIFSSIIGIAGLMLLARRRKN.

The protein resides in the secreted. The protein localises to the cell wall. The chain is Putative surface protein SAV2496/SAV2497 from Staphylococcus aureus (strain Mu50 / ATCC 700699).